The chain runs to 317 residues: MSAGKTVVIALGGNAMLQAKEKGDYDTQRKNVEIAASEIYKIHKAGYKVVLTSGNAPQVGAIKLQNQAAAGVSPEMPLHVCGAMSQGFIGYMMSQAMDNVFCANNEPANCVTCVTQTLVDPKDQAFTNPTKPRWRFYTEQEAKDLMAANPGKILREDAWPAGWRVVVPSPRPLEIVEYGVIKTLIDNNVLVICTNGGGIPCKRENKVISGVDAVIDKDLATSLLAKTLNSDYLMILTDVLNACINYKKPDERKLEEIKLSEILALEKDGHFAAGSMGPKVRAAIEFTQATGKMSIITSLSTAVDALNGKCGTRIIKD.

Belongs to the carbamate kinase family. As to quaternary structure, homodimer.

It catalyses the reaction hydrogencarbonate + NH4(+) + ATP = carbamoyl phosphate + ADP + H2O + H(+). It participates in metabolic intermediate metabolism; carbamoyl phosphate degradation; CO(2) and NH(3) from carbamoyl phosphate: step 1/1. The chain is Carbamate kinase (CBK) from Giardia intestinalis (Giardia lamblia).